A 200-amino-acid polypeptide reads, in one-letter code: Small ribosomal subunit protein uS4 (200 aa).

The tract at residues 22–42 (TGKELEKRPYAPGPHGPGQRK) is disordered. One can recognise an S4 RNA-binding domain in the interval 92-155 (TRLDNLVYRL…QNLAVVKESV (64 aa)).

The protein belongs to the universal ribosomal protein uS4 family. Part of the 30S ribosomal subunit. Contacts protein S5. The interaction surface between S4 and S5 is involved in control of translational fidelity.

Functionally, one of the primary rRNA binding proteins, it binds directly to 16S rRNA where it nucleates assembly of the body of the 30S subunit. In terms of biological role, with S5 and S12 plays an important role in translational accuracy. In Bacillus pumilus (strain SAFR-032), this protein is Small ribosomal subunit protein uS4.